We begin with the raw amino-acid sequence, 397 residues long: Lipoyl synthase 2, chloroplastic (397 aa).

A chloroplast-targeting transit peptide spans 1-35; the sequence is MIEQSLSKPSFSLSIPIPKAPKSKSSFFCSYSKIR. A disordered region spans residues 49–85; it reads AKHPQNSTTINNGSSSSASVDLKNNEKGPYPYPGGGK. A compositionally biased stretch (low complexity) spans 54 to 67; that stretch reads NSTTINNGSSSSAS. [4Fe-4S] cluster contacts are provided by C128, C133, C139, C159, C163, C166, and S374. The region spanning 142–363 is the Radical SAM core domain; the sequence is GGGDGIATAT…KEYGESIGFR (222 aa).

It belongs to the radical SAM superfamily. Lipoyl synthase family. Requires [4Fe-4S] cluster as cofactor.

Its subcellular location is the plastid. It localises to the chloroplast. The catalysed reaction is [[Fe-S] cluster scaffold protein carrying a second [4Fe-4S](2+) cluster] + N(6)-octanoyl-L-lysyl-[protein] + 2 oxidized [2Fe-2S]-[ferredoxin] + 2 S-adenosyl-L-methionine + 4 H(+) = [[Fe-S] cluster scaffold protein] + N(6)-[(R)-dihydrolipoyl]-L-lysyl-[protein] + 4 Fe(3+) + 2 hydrogen sulfide + 2 5'-deoxyadenosine + 2 L-methionine + 2 reduced [2Fe-2S]-[ferredoxin]. The protein operates within protein modification; protein lipoylation via endogenous pathway; protein N(6)-(lipoyl)lysine from octanoyl-[acyl-carrier-protein]: step 2/2. In terms of biological role, catalyzes the radical-mediated insertion of two sulfur atoms into the C-6 and C-8 positions of the octanoyl moiety bound to the lipoyl domains of lipoate-dependent enzymes, thereby converting the octanoylated domains into lipoylated derivatives. This chain is Lipoyl synthase 2, chloroplastic, found in Populus trichocarpa (Western balsam poplar).